The chain runs to 150 residues: UPF0260 protein PputGB1_4117 (150 aa).

Belongs to the UPF0260 family.

This chain is UPF0260 protein PputGB1_4117, found in Pseudomonas putida (strain GB-1).